Here is a 658-residue protein sequence, read N- to C-terminus: Katanin p80 WD40 repeat-containing subunit B1 (658 aa).

The tract at residues 1–284 (MATPVVTKTA…VADLAICNDQ (284 aa)) is interaction with dynein. Residues 1-300 (MATPVVTKTA…SQSNVSSYVV (300 aa)) are interaction with centrosomes. 6 WD repeats span residues 18–58 (AHAS…CIMS), 61–100 (GHTS…ILRT), 103–142 (GHKA…CVFR), 145–184 (GHSQ…MMSE), 187–226 (GHTG…VVSC), and 229–269 (GEPG…DVVL). The tract at residues 285-437 (LIGVAFSQSN…LPQLPVPNLE (153 aa)) is interaction with PAFAH1B1. Residues 311 to 329 (VTQDPVQANQPLTQQTPNP) are compositionally biased toward polar residues. Disordered regions lie at residues 311–419 (VTQD…EVSK) and 434–458 (PNLE…PDII). A compositionally biased stretch (basic and acidic residues) spans 352–374 (HNSESERRSPSSEDDRDERESRA). Thr-395 carries the phosphothreonine modification. Residues 436–658 (LEVPARPSVM…ELHLLMASLD (223 aa)) are interaction with KATNA1 and NDEL1.

The protein belongs to the WD repeat KATNB1 family. Interacts with KATNA1. This interaction enhances the microtubule binding and severing activity of KATNA1 and also targets this activity to the centrosome. This interaction is weakly competed by KATNBL1 which has a lower affinity for it. Interacts with ASPM; the katanin complex formation KATNA1:KATNB1 is required for the association of ASPM. Interacts with dynein, microtubules, NDEL1 and PAFAH1B1. Interacts with KATNAL1; this interaction is weakly competed by KATNBL1 which has a lower affinity for it. Interacts with CAMSAP2 and CAMSAP3; leading to regulate the length of CAMSAP-decorated microtubule stretches.

The protein resides in the cytoplasm. It localises to the cytoskeleton. Its subcellular location is the microtubule organizing center. It is found in the centrosome. The protein localises to the spindle pole. The protein resides in the spindle. Its function is as follows. Participates in a complex which severs microtubules in an ATP-dependent manner. May act to target the enzymatic subunit of this complex to sites of action such as the centrosome. Microtubule severing may promote rapid reorganization of cellular microtubule arrays and the release of microtubules from the centrosome following nucleation. Microtubule release from the mitotic spindle poles may allow depolymerization of the microtubule end proximal to the spindle pole, leading to poleward microtubule flux and poleward motion of chromosome. The function in regulating microtubule dynamics at spindle poles seems to depend on the association of the katanin KATNA1:KATNB1 complex with ASPM which recruits it to microtubules. Reversely KATNA1:KATNB1 can enhance ASPM blocking activity on microtubule minus-end growth. Microtubule release within the cell body of neurons may be required for their transport into neuronal processes by microtubule-dependent motor proteins. This transport is required for axonal growth. The chain is Katanin p80 WD40 repeat-containing subunit B1 (Katnb1) from Mus musculus (Mouse).